The following is a 111-amino-acid chain: MEARAIAKYIRMSPTKVGVILDLIRGKQVNEAFAILQYTPREAAVVINKVLKSAVANAENNLELNADNLYVSECFVGQGSTLKRFQPHAQGRAFKILKKTSNITVVVKERA.

The protein belongs to the universal ribosomal protein uL22 family. Part of the 50S ribosomal subunit.

Its function is as follows. This protein binds specifically to 23S rRNA; its binding is stimulated by other ribosomal proteins, e.g. L4, L17, and L20. It is important during the early stages of 50S assembly. It makes multiple contacts with different domains of the 23S rRNA in the assembled 50S subunit and ribosome. In terms of biological role, the globular domain of the protein is located near the polypeptide exit tunnel on the outside of the subunit, while an extended beta-hairpin is found that lines the wall of the exit tunnel in the center of the 70S ribosome. The protein is Large ribosomal subunit protein uL22 of Clostridium beijerinckii (strain ATCC 51743 / NCIMB 8052) (Clostridium acetobutylicum).